The following is a 193-amino-acid chain: Peptidyl-tRNA hydrolase (193 aa).

Tyr-17 is a binding site for tRNA. His-22 functions as the Proton acceptor in the catalytic mechanism. TRNA is bound by residues Tyr-68, Asn-70, and Asn-116.

The protein belongs to the PTH family. Monomer.

It localises to the cytoplasm. It carries out the reaction an N-acyl-L-alpha-aminoacyl-tRNA + H2O = an N-acyl-L-amino acid + a tRNA + H(+). Functionally, hydrolyzes ribosome-free peptidyl-tRNAs (with 1 or more amino acids incorporated), which drop off the ribosome during protein synthesis, or as a result of ribosome stalling. In terms of biological role, catalyzes the release of premature peptidyl moieties from peptidyl-tRNA molecules trapped in stalled 50S ribosomal subunits, and thus maintains levels of free tRNAs and 50S ribosomes. This chain is Peptidyl-tRNA hydrolase, found in Acinetobacter baumannii (strain AB307-0294).